The primary structure comprises 523 residues: GMP synthase [glutamine-hydrolyzing] (523 aa).

Residues 8–205 enclose the Glutamine amidotransferase type-1 domain; the sequence is KILILDFGSQ…VVGICGCECK (198 aa). The Nucleophile role is filled by cysteine 85. Active-site residues include histidine 179 and glutamate 181. Positions 206–398 constitute a GMPS ATP-PPase domain; sequence WTAENIIERR…LGLPAEMLNR (193 aa). 233–239 lines the ATP pocket; sequence SGGVDSS.

Homodimer.

The enzyme catalyses XMP + L-glutamine + ATP + H2O = GMP + L-glutamate + AMP + diphosphate + 2 H(+). It participates in purine metabolism; GMP biosynthesis; GMP from XMP (L-Gln route): step 1/1. Functionally, catalyzes the synthesis of GMP from XMP. In Actinobacillus pleuropneumoniae serotype 5b (strain L20), this protein is GMP synthase [glutamine-hydrolyzing].